A 483-amino-acid polypeptide reads, in one-letter code: Matrix metalloproteinase-20 (483 aa).

The signal sequence occupies residues 1–22 (MKVLPASGLAVFLIMALKFSTA). The propeptide occupies 23 to 107 (APSLVAASPR…PRCGVPDVAN (85 aa)). Positions 98–105 (PRCGVPDV) match the Cysteine switch motif. Cys-100 provides a ligand contact to Zn(2+). Ca(2+) is bound by residues Glu-164, Ala-165, and Asp-166. Zn(2+)-binding residues include His-176 and Asp-178. 4 residues coordinate Ca(2+): Asp-183, Gly-184, Arg-186, and Thr-188. Position 191 (His-191) interacts with Zn(2+). Ca(2+)-binding residues include Glu-197, Gly-198, Gly-200, and Asp-202. His-204 contacts Zn(2+). Ca(2+) is bound by residues Asp-206 and Glu-209. Residue His-226 coordinates Zn(2+). The active site involves Glu-227. Residues His-230 and His-236 each coordinate Zn(2+). 4 Hemopexin repeats span residues 293 to 343 (PDLC…FPQL), 344 to 389 (MSNV…GFPR), 391 to 439 (VQQI…FSGV), and 440 to 483 (NGQI…WIGC). Cysteines 296 and 483 form a disulfide.

Belongs to the peptidase M10A family. It depends on Zn(2+) as a cofactor. Ca(2+) is required as a cofactor. Autoactivates at least at the 107-Asn-|-Tyr-108 site. Expressed specifically in the enamel organ.

The protein resides in the secreted. Its subcellular location is the extracellular space. It localises to the extracellular matrix. Functionally, degrades amelogenin, the major protein component of the enamel matrix and two of the macromolecules characterizing the cartilage extracellular matrix: aggrecan and the cartilage oligomeric matrix protein (COMP). May play a central role in tooth enamel formation. Cleaves aggrecan at the '360-Asn-|-Phe-361' site. The polypeptide is Matrix metalloproteinase-20 (MMP20) (Homo sapiens (Human)).